The chain runs to 192 residues: PBAN-type neuropeptides (192 aa).

Residues 1–23 (MYKTNIVFNVLALALFSIFFASC) form the signal peptide. Leu47 carries the post-translational modification Leucine amide. A propeptide spanning residues 51 to 94 (SMKPSTEDNRQTFLRLLEAADALKFYYDQLPYERQADEPETKVT) is cleaved from the precursor. 4 positions are modified to leucine amide: Leu103, Leu122, Leu158, and Leu168. Residues 171–192 (ELSYDYPTKYRVARSVNKTMDN) constitute a propeptide that is removed on maturation.

It belongs to the pyrokinin family. In terms of tissue distribution, expression is restricted to the subesophageal ganglion.

It is found in the secreted. A hormone that controls sex pheromone production in females and pheromone responsiveness in male. Also mediates visceral muscle contractile activity (myotropic activity). Identical to MRCH which is implicated in the formation of both melanin in the cuticle and ommochrome in the epidermis of armyworm species. In terms of biological role, diapause hormone (DH) is responsible for induction of embryonic diapause. Its function is as follows. The three SGNPS are far less active than DH in inducing diapause eggs. Beta-SGNP expressed higher pban activity than PBAN-I, but alpha- and gamma-SGNP were far less active in pheromonotropic activity. In Bombyx mori (Silk moth), this protein is PBAN-type neuropeptides.